The following is a 298-amino-acid chain: Oxidoreductase YdhF (298 aa).

The Proton donor role is filled by tyrosine 55. NADP(+) contacts are provided by residues 158–159, 209–220, and 263–264; these read SN, WSCLGGGRLFND, and SG.

Belongs to the aldo/keto reductase family. Aldo/keto reductase 2 subfamily.

In terms of biological role, may function as oxidoreductase. This Escherichia coli (strain K12) protein is Oxidoreductase YdhF (ydhF).